A 182-amino-acid polypeptide reads, in one-letter code: Crossover junction endodeoxyribonuclease RuvC (182 aa).

Catalysis depends on residues Asp-7, Glu-69, and Asp-141. 3 residues coordinate Mg(2+): Asp-7, Glu-69, and Asp-141.

The protein belongs to the RuvC family. As to quaternary structure, homodimer which binds Holliday junction (HJ) DNA. The HJ becomes 2-fold symmetrical on binding to RuvC with unstacked arms; it has a different conformation from HJ DNA in complex with RuvA. In the full resolvosome a probable DNA-RuvA(4)-RuvB(12)-RuvC(2) complex forms which resolves the HJ. Mg(2+) is required as a cofactor.

The protein localises to the cytoplasm. The catalysed reaction is Endonucleolytic cleavage at a junction such as a reciprocal single-stranded crossover between two homologous DNA duplexes (Holliday junction).. Functionally, the RuvA-RuvB-RuvC complex processes Holliday junction (HJ) DNA during genetic recombination and DNA repair. Endonuclease that resolves HJ intermediates. Cleaves cruciform DNA by making single-stranded nicks across the HJ at symmetrical positions within the homologous arms, yielding a 5'-phosphate and a 3'-hydroxyl group; requires a central core of homology in the junction. The consensus cleavage sequence is 5'-(A/T)TT(C/G)-3'. Cleavage occurs on the 3'-side of the TT dinucleotide at the point of strand exchange. HJ branch migration catalyzed by RuvA-RuvB allows RuvC to scan DNA until it finds its consensus sequence, where it cleaves and resolves the cruciform DNA. This is Crossover junction endodeoxyribonuclease RuvC from Polaromonas sp. (strain JS666 / ATCC BAA-500).